A 193-amino-acid chain; its full sequence is Imidazoleglycerol-phosphate dehydratase (193 aa).

Belongs to the imidazoleglycerol-phosphate dehydratase family.

Its subcellular location is the cytoplasm. The enzyme catalyses D-erythro-1-(imidazol-4-yl)glycerol 3-phosphate = 3-(imidazol-4-yl)-2-oxopropyl phosphate + H2O. It participates in amino-acid biosynthesis; L-histidine biosynthesis; L-histidine from 5-phospho-alpha-D-ribose 1-diphosphate: step 6/9. The chain is Imidazoleglycerol-phosphate dehydratase from Saccharolobus islandicus (strain Y.G.57.14 / Yellowstone #1) (Sulfolobus islandicus).